Here is a 191-residue protein sequence, read N- to C-terminus: Ribosome maturation factor RimM (191 aa).

One can recognise a PRC barrel domain in the interval 107–184; the sequence is EDDEWHQDDL…LVLVSPPPGL (78 aa).

The protein belongs to the RimM family. Binds ribosomal protein uS19.

Its subcellular location is the cytoplasm. An accessory protein needed during the final step in the assembly of 30S ribosomal subunit, possibly for assembly of the head region. Essential for efficient processing of 16S rRNA. May be needed both before and after RbfA during the maturation of 16S rRNA. It has affinity for free ribosomal 30S subunits but not for 70S ribosomes. In Kocuria rhizophila (strain ATCC 9341 / DSM 348 / NBRC 103217 / DC2201), this protein is Ribosome maturation factor RimM.